A 310-amino-acid chain; its full sequence is Methionyl-tRNA formyltransferase (310 aa).

Serine 110–proline 113 contacts (6S)-5,6,7,8-tetrahydrofolate.

The protein belongs to the Fmt family.

The enzyme catalyses L-methionyl-tRNA(fMet) + (6R)-10-formyltetrahydrofolate = N-formyl-L-methionyl-tRNA(fMet) + (6S)-5,6,7,8-tetrahydrofolate + H(+). In terms of biological role, attaches a formyl group to the free amino group of methionyl-tRNA(fMet). The formyl group appears to play a dual role in the initiator identity of N-formylmethionyl-tRNA by promoting its recognition by IF2 and preventing the misappropriation of this tRNA by the elongation apparatus. This Halorhodospira halophila (strain DSM 244 / SL1) (Ectothiorhodospira halophila (strain DSM 244 / SL1)) protein is Methionyl-tRNA formyltransferase.